A 48-amino-acid polypeptide reads, in one-letter code: Toxin CSTX-14 (48 aa).

4 disulfide bridges follow: C3/C18, C10/C27, C17/C42, and C29/C40.

The protein belongs to the neurotoxin 19 (CSTX) family. 12 subfamily. Heterodimer of A and B chains; disulfide-linked. Contains 4 disulfide bonds. As to expression, expressed by the venom gland.

The protein resides in the secreted. This is Toxin CSTX-14 from Cupiennius salei (American wandering spider).